The chain runs to 153 residues: MKTKQLVASEEVYDFLKVIWPDYETESRYDNLSLIVCTLSDPDCVRWLSENMKFGDEKQLALMKEKYGWEVGDKLPEWLHSSYHRLLLIGELLESNLKLKKYTVEITETLSRLVSIEAENPDEAERLVREKYKSCEIVLDADDFQDYDTSIYE.

This is Protein DpnD from Streptococcus pneumoniae serotype 4 (strain ATCC BAA-334 / TIGR4).